Reading from the N-terminus, the 293-residue chain is Elongation factor Ts (293 aa).

Residues 79–82 (TDFV) form an involved in Mg(2+) ion dislocation from EF-Tu region. A Phosphoserine modification is found at S149.

Belongs to the EF-Ts family.

It is found in the cytoplasm. Associates with the EF-Tu.GDP complex and induces the exchange of GDP to GTP. It remains bound to the aminoacyl-tRNA.EF-Tu.GTP complex up to the GTP hydrolysis stage on the ribosome. The polypeptide is Elongation factor Ts (tsf) (Bacillus subtilis (strain 168)).